A 236-amino-acid chain; its full sequence is Small ribosomal subunit protein uS2c (236 aa).

It belongs to the universal ribosomal protein uS2 family.

The protein localises to the plastid. Its subcellular location is the chloroplast. The polypeptide is Small ribosomal subunit protein uS2c (rps2) (Barbarea verna (Land cress)).